The chain runs to 421 residues: Eukaryotic translation initiation factor 3 subunit E (421 aa).

The 180-residue stretch at 215–394 (FFQNDTKGKD…STVILNHPSV (180 aa)) folds into the PCI domain.

It belongs to the eIF-3 subunit E family. Component of the eukaryotic translation initiation factor 3 (eIF-3) complex.

It localises to the cytoplasm. Its function is as follows. Component of the eukaryotic translation initiation factor 3 (eIF-3) complex, which is involved in protein synthesis of a specialized repertoire of mRNAs and, together with other initiation factors, stimulates binding of mRNA and methionyl-tRNAi to the 40S ribosome. The eIF-3 complex specifically targets and initiates translation of a subset of mRNAs involved in cell proliferation. The protein is Eukaryotic translation initiation factor 3 subunit E of Yarrowia lipolytica (strain CLIB 122 / E 150) (Yeast).